Reading from the N-terminus, the 97-residue chain is Small ribosomal subunit protein bS20 (97 aa).

The protein belongs to the bacterial ribosomal protein bS20 family.

Functionally, binds directly to 16S ribosomal RNA. This is Small ribosomal subunit protein bS20 from Prochlorococcus marinus (strain MIT 9312).